Here is a 195-residue protein sequence, read N- to C-terminus: Heterogeneous nuclear ribonucleoprotein A/B (195 aa).

Positions 1-23 (EEVADGQAHGEXVYREEHHEGEK) are disordered. A compositionally biased stretch (basic and acidic residues) spans 12–23 (XVYREEHHEGEK). The RRM domain maps to 32–48 (EETKLFVGALSWETTEK). 2 positions are modified to asymmetric dimethylarginine: R119 and R122. S173 bears the Phosphoserine; by CK2 mark.

In terms of processing, extensively phosphorylated on tyrosine residues.

Its subcellular location is the cytoplasm. It localises to the nucleus. May regulate mRNA translation and stability. It binds to poly(A) and poly(U) regions of RNA. This binding is inhibited when the protein is phosphorylated. The protein is Heterogeneous nuclear ribonucleoprotein A/B of Artemia salina (Brine shrimp).